We begin with the raw amino-acid sequence, 714 residues long: Polyribonucleotide nucleotidyltransferase (714 aa).

The Mg(2+) site is built by Asp-487 and Asp-493. The KH domain maps to 554–613 (PRIETLKIPTDKIREVIGTGGKVIREIVEKTGAKINIEDDGTVKVASSDGNSIKAAIAWI). The 69-residue stretch at 623 to 691 (GQIYEGTVVK…DRGKVRLSMR (69 aa)) folds into the S1 motif domain.

This sequence belongs to the polyribonucleotide nucleotidyltransferase family. It depends on Mg(2+) as a cofactor.

The protein resides in the cytoplasm. The catalysed reaction is RNA(n+1) + phosphate = RNA(n) + a ribonucleoside 5'-diphosphate. Its function is as follows. Involved in mRNA degradation. Catalyzes the phosphorolysis of single-stranded polyribonucleotides processively in the 3'- to 5'-direction. This is Polyribonucleotide nucleotidyltransferase from Methylocella silvestris (strain DSM 15510 / CIP 108128 / LMG 27833 / NCIMB 13906 / BL2).